The primary structure comprises 938 residues: Isoleucine--tRNA ligase (938 aa).

The 'HIGH' region motif lies at 58-68; the sequence is PYANGSIHIGH. K183 carries the post-translational modification N6-acetyllysine. E561 provides a ligand contact to L-isoleucyl-5'-AMP. Residues 602 to 606 carry the 'KMSKS' region motif; sequence KMSKS. Residue K605 coordinates ATP. Zn(2+) contacts are provided by C901, C904, C921, and C924.

The protein belongs to the class-I aminoacyl-tRNA synthetase family. IleS type 1 subfamily. As to quaternary structure, monomer. Zn(2+) serves as cofactor.

It localises to the cytoplasm. It carries out the reaction tRNA(Ile) + L-isoleucine + ATP = L-isoleucyl-tRNA(Ile) + AMP + diphosphate. Functionally, catalyzes the attachment of isoleucine to tRNA(Ile). As IleRS can inadvertently accommodate and process structurally similar amino acids such as valine, to avoid such errors it has two additional distinct tRNA(Ile)-dependent editing activities. One activity is designated as 'pretransfer' editing and involves the hydrolysis of activated Val-AMP. The other activity is designated 'posttransfer' editing and involves deacylation of mischarged Val-tRNA(Ile). The polypeptide is Isoleucine--tRNA ligase (Escherichia coli O9:H4 (strain HS)).